The chain runs to 146 residues: Hemoglobin cathodic subunit beta (146 aa).

The region spanning 2–146 (EWSASERSTI…VVSALSKQYF (145 aa)) is the Globin domain. Positions 63 and 92 each coordinate heme b.

The protein belongs to the globin family. As to quaternary structure, heterotetramer of two alpha chains and two beta chains. Red blood cells.

Involved in oxygen transport from gills to the various peripheral tissues. The protein is Hemoglobin cathodic subunit beta (hbb2) of Anguilla anguilla (European freshwater eel).